The sequence spans 237 residues: Ribosomal RNA small subunit methyltransferase G (237 aa).

S-adenosyl-L-methionine-binding positions include G78, F83, 129–130 (AE), and R148. Residues 218–237 (KKETPNKYPRKAGMPNKRPL) form a disordered region.

Belongs to the methyltransferase superfamily. RNA methyltransferase RsmG family.

It localises to the cytoplasm. Its function is as follows. Specifically methylates the N7 position of a guanine in 16S rRNA. The protein is Ribosomal RNA small subunit methyltransferase G of Streptococcus gordonii (strain Challis / ATCC 35105 / BCRC 15272 / CH1 / DL1 / V288).